Here is an 89-residue protein sequence, read N- to C-terminus: Dynein light chain (89 aa).

The protein belongs to the dynein light chain family. Tegument.

Its subcellular location is the cytoplasm. The protein localises to the cytoskeleton. In terms of biological role, acts as a non-catalytic accessory component of a dynein complex. In Schistosoma mansoni (Blood fluke), this protein is Dynein light chain (DLC).